The sequence spans 578 residues: MKYILVTGGVISGVGKGIIASSIGTILKSCGLRVTAIKIDPYINIDAGTFSPYEHGEVFVLNDGGEVDLDLGNYERFLDINLYKDNNITTGKIYQQVINRERRGDYLGKTVQVVPHITDAIQEWVLNQAKVPVDRDQKEPQICVIELGGTIGDIEGMPFIEAFRQFQFKAKRENFCNIHVSLVPQPSATGEQKTKPTQNSVRALRGLGLSPDLIVCRSAKPIEMAVKQKISMFCHVEPEQVIFVHDVSSTYRVPILLQEQGIIKYFKQRLSIPIEDQPSTQLFKWKRMADRYERLLKTCSIALVGKYTKLSDCYTSVFKALEHSALAINHKLNLMYIDSADLEPSMKAQDPVKYHKAWEELCKAEGILVPGGFGLRGTEGKIQAITWARERKIPFLGICLGMQLAVVEFARNILKMTDANSTEFDPNTKNPAVIDMPEHHPGDMGGTMRLGSRKTVFKTSESVVKKLYDNQDFVEERHRHRYEVNPELVQQFEEKGLKFVGQDNEGQRMEIIELEGHPYFVGVQFHPEFCSRPMKPSPPYLGFMLAASGKLNTYVQNGCKLSPRNSYSEHSDESSSDS.

Residues 300 to 553 (SIALVGKYTK…MLAASGKLNT (254 aa)) form the Glutamine amidotransferase type-1 domain. Residues cysteine 399, histidine 526, and glutamate 528 each act as for GATase activity in the active site.

Belongs to the CTP synthase family.

It carries out the reaction UTP + L-glutamine + ATP + H2O = CTP + L-glutamate + ADP + phosphate + 2 H(+). Its pathway is pyrimidine metabolism; CTP biosynthesis via de novo pathway; CTP from UDP: step 2/2. Its function is as follows. Catalyzes the ATP-dependent amination of UTP to CTP with either L-glutamine or ammonia as the source of nitrogen. Constitutes the rate-limiting enzyme in the synthesis of cytosine nucleotides. This is CTP synthase 2 (ctps2) from Xenopus laevis (African clawed frog).